The primary structure comprises 431 residues: MAVGAAAVTEVGDTASPVGSSGASGGAIASGSVARVGTAAAVTALCGYAVIYLAARNLAPNGFSVFGVFWGAFGLVTGAANGLLQETTREVRSLGYLDVSADGRRTHPLRVSGMVGLGSLVVIAGSSPLWSGRVFAEARWLSVALLSIGLAGFCLHATLLGMLAGTNRWTQYGALMVADAVIRVVVAAATFVIGWQLVGFIWATVAGSVAWLIMLMTSPPTRAAARLMTPGATATFLRGAAHSIIAAGASAILVMGFPVLLKLTSNELGAQGGVVILAVTLTRAPLLVPLTAMQGNLIAHFVDERTERIRALIAPAALIGGVGAVGMLAAGVVGPWIMRVAFGSEYQSSSALLAWLTAAAVAIAMLTLTGAAAVAAALHRAYSLGWVGATVGSGLLLLLPLSLETRTVVALLCGPLVGIGVHLVALARTDE.

12 helical membrane-spanning segments follow: residues 33–53, 63–83, 111–131, 143–163, 175–195, 197–217, 241–261, 273–293, 318–338, 358–378, 381–401, and 407–427; these read VARV…VIYL, FSVF…ANGL, VSGM…PLWS, VALL…LGML, LMVA…VIGW, LVGF…MLMT, AHSI…PVLL, GVVI…LTAM, LIGG…PWIM, AAAV…AAAL, AYSL…LLPL, and TVVA…VALA.

This sequence to M.tuberculosis Rv1510 and M.bovis Mb3654.

It is found in the cell membrane. This is an uncharacterized protein from Mycobacterium tuberculosis (strain ATCC 25618 / H37Rv).